The following is a 1346-amino-acid chain: Adhesion G protein-coupled receptor A3 (1346 aa).

The signal sequence occupies residues 1–21; the sequence is MSVLCVLLLAFVLPLRGSSSA. The segment at 18–45 is disordered; that stretch reads SSSAGSTECKTYDERSRSAGKSSPSGAT. The Extracellular portion of the chain corresponds to 22–739; the sequence is GSTECKTYDE…NVFIFRPLHP (718 aa). 4 LRR repeats span residues 66–90, 91–114, 116–138, and 139–162; these read FPNRTVSLILSNNKIQELLNGSFVG, LSSLERLDIKNNIITHIEPGAFYG, FSLKRLDLSKNLIGCLHVDVFKG, and LTNLVKLNLSENKFSSLSQGIFDS. Residues 176–223 form the LRRCT domain; sequence LLCDCNLQWLVVWIKEKAIGVKETRCSFPRSLQGQLITTLRAETLTCD. Residues 229–327 form the Ig-like domain; sequence PSFQMTPSQH…GNNTRTVHIV (99 aa). Cysteine 251 and cysteine 311 form a disulfide bridge. 3 LRR repeats span residues 503–529, 574–600, and 611–632; these read LQRIALLRVSNGALAYSTNSPNIALEA, TSNLSALALKNTIVEASLQLPPTLFSS, and VYKLHLLAFRNGKLFPPTGNSS. The region spanning 563-728 is the GAIN-B domain; it reads PERQLSFKCN…AVLMDLNRTG (166 aa). A GPS region spans residues 679–728; that stretch reads PAFWNFSLQGGQGGWQSDGCRILHQDDNFTTVSCHSLNSYAVLMDLNRTG. Residues cysteine 698 and cysteine 712 are joined by a disulfide bond. The chain crosses the membrane as a helical span at residues 740-760; the sequence is VIYSTALVLVLCLLSVIVSYI. The Cytoplasmic segment spans residues 761–773; sequence YHHKSVRISKKCW. A helical membrane pass occupies residues 774-794; that stretch reads HMLVNLCLHILLTCAVFVGGI. Topologically, residues 795–804 are extracellular; that stretch reads NQTYNASVCQ. A helical transmembrane segment spans residues 805–825; it reads AMGIVLHYSTLATALWSGVTA. Over 826-854 the chain is Cytoplasmic; the sequence is RNIYKQVTRKAKRYEELDEPPPPPRPMLR. The helical transmembrane segment at 855 to 875 threads the bilayer; the sequence is FYLIGGGIPIIVCGITAAANI. At 876-897 the chain is on the extracellular side; it reads KNYGSQVNAPYCWMAWEPSLGA. The helical transmembrane segment at 898-918 threads the bilayer; sequence FYGPAAFIVFVDCMYFLSILI. The Cytoplasmic segment spans residues 919 to 977; that stretch reads QLRRHPERRFELKEQSEEQQHLSVTEATEITPVHLESSPTAQPVPMSALENEHTFVSQL. A helical membrane pass occupies residues 978 to 998; it reads MGVAGSLTLYAALWVFGALAI. Over 999–1005 the chain is Extracellular; it reads SQEHPAD. A helical membrane pass occupies residues 1006-1026; sequence LVFACLFGALALGLGAFLVAH. Over 1027–1346 the chain is Cytoplasmic; it reads HCVNRQDMRR…TGLWKHETTV (320 aa). Residues 1157 to 1169 are compositionally biased toward polar residues; the sequence is SVNNNNLPGNANI. 2 disordered regions span residues 1157-1188 and 1202-1284; these read SVNNNNLPGNANITGHPGRHHKNRSRAHRASR and SVEG…DGSE. Basic residues-rich tracts occupy residues 1173-1187 and 1212-1226; these read PGRHHKNRSRAHRAS and NKRHHHESLHARNSR. The span at 1238-1252 shows a compositional bias: low complexity; that stretch reads QSQLQQDSSDAASTS. The segment covering 1266–1280 has biased composition (gly residues); the sequence is IGNGFGHGISNGGLL. A PDZ-binding motif is present at residues 1344–1346; sequence TTV.

This sequence belongs to the G-protein coupled receptor 2 family. Adhesion G-protein coupled receptor (ADGR) subfamily. As to quaternary structure, interacts (via PDZ-binding motif) with disheveled proteins; leading to the localization of dishevelled proteins to specific membrane subdomains. As to expression, ubiquitously expressed at very low levels.

The protein localises to the cell membrane. Its function is as follows. Orphan receptor that acts as a critical modulator of planar cell polarity during gastrulation. Controls the localization of dishevelled. This chain is Adhesion G protein-coupled receptor A3 (adgra3), found in Danio rerio (Zebrafish).